Here is a 254-residue protein sequence, read N- to C-terminus: DNA repair protein RecO (254 aa).

It belongs to the RecO family.

In terms of biological role, involved in DNA repair and RecF pathway recombination. This is DNA repair protein RecO from Anaeromyxobacter dehalogenans (strain 2CP-C).